The sequence spans 198 residues: Large ribosomal subunit protein bL9 (198 aa).

A compositionally biased stretch (basic and acidic residues) spans 156 to 166; sequence RGEDISTRQED. Residues 156-198 are disordered; the sequence is RGEDISTRQEDQDAAAEALAAAGEFFDPEAHNDGEQEEEAGDK.

Belongs to the bacterial ribosomal protein bL9 family.

Functionally, binds to the 23S rRNA. This Rhodopseudomonas palustris (strain BisB18) protein is Large ribosomal subunit protein bL9.